The following is a 665-amino-acid chain: Methionine--tRNA ligase (665 aa).

The short motif at 12–22 (YYPSGKLHIGS) is the 'HIGH' region element. Residues 308 to 312 (KMSKS) carry the 'KMSKS' region motif. Lys311 lines the ATP pocket. Positions 562–665 (TFDAVEIRVA…SSVPNGSIIG (104 aa)) constitute a tRNA-binding domain.

Belongs to the class-I aminoacyl-tRNA synthetase family. MetG type 2B subfamily. Homodimer.

Its subcellular location is the cytoplasm. It catalyses the reaction tRNA(Met) + L-methionine + ATP = L-methionyl-tRNA(Met) + AMP + diphosphate. Functionally, is required not only for elongation of protein synthesis but also for the initiation of all mRNA translation through initiator tRNA(fMet) aminoacylation. This Streptococcus pyogenes serotype M3 (strain SSI-1) protein is Methionine--tRNA ligase (metG).